The following is a 140-amino-acid chain: MAIERTFSILKPDATERNITGAINALIEKAGLRIVAQKRIRMTRDQAETFYAVHKERPFFGELVDFMISGPVVVQVLEGEGAIAKYRDVMGATDPSKAADGTIRKLHAKSIGENSVHGSDAAETAKIEIAQFFSGNEIVG.

6 residues coordinate ATP: Lys11, Phe59, Arg87, Thr93, Arg104, and Asn114. Catalysis depends on His117, which acts as the Pros-phosphohistidine intermediate.

Belongs to the NDK family. In terms of assembly, homotetramer. Mg(2+) serves as cofactor.

Its subcellular location is the cytoplasm. The enzyme catalyses a 2'-deoxyribonucleoside 5'-diphosphate + ATP = a 2'-deoxyribonucleoside 5'-triphosphate + ADP. The catalysed reaction is a ribonucleoside 5'-diphosphate + ATP = a ribonucleoside 5'-triphosphate + ADP. Functionally, major role in the synthesis of nucleoside triphosphates other than ATP. The ATP gamma phosphate is transferred to the NDP beta phosphate via a ping-pong mechanism, using a phosphorylated active-site intermediate. The polypeptide is Nucleoside diphosphate kinase (Rhodopseudomonas palustris (strain ATCC BAA-98 / CGA009)).